The following is a 336-amino-acid chain: Anthranilate phosphoribosyltransferase (336 aa).

Residues Gly-82, 85-86, Thr-90, 92-95, 110-118, and Ser-122 contribute to the 5-phospho-alpha-D-ribose 1-diphosphate site; these read GD, NIST, and KHGNRSVSS. Gly-82 is a binding site for anthranilate. Ser-94 contributes to the Mg(2+) binding site. Residue Asn-113 coordinates anthranilate. Residue Arg-168 coordinates anthranilate. Mg(2+)-binding residues include Asp-227 and Glu-228.

The protein belongs to the anthranilate phosphoribosyltransferase family. In terms of assembly, homodimer. Requires Mg(2+) as cofactor.

The catalysed reaction is N-(5-phospho-beta-D-ribosyl)anthranilate + diphosphate = 5-phospho-alpha-D-ribose 1-diphosphate + anthranilate. The protein operates within amino-acid biosynthesis; L-tryptophan biosynthesis; L-tryptophan from chorismate: step 2/5. Its function is as follows. Catalyzes the transfer of the phosphoribosyl group of 5-phosphorylribose-1-pyrophosphate (PRPP) to anthranilate to yield N-(5'-phosphoribosyl)-anthranilate (PRA). This is Anthranilate phosphoribosyltransferase from Leptospira interrogans serogroup Icterohaemorrhagiae serovar copenhageni (strain Fiocruz L1-130).